Here is a 476-residue protein sequence, read N- to C-terminus: UDP-N-acetylmuramate--L-alanine ligase (476 aa).

Glycine 115–threonine 121 serves as a coordination point for ATP.

The protein belongs to the MurCDEF family.

It is found in the cytoplasm. It catalyses the reaction UDP-N-acetyl-alpha-D-muramate + L-alanine + ATP = UDP-N-acetyl-alpha-D-muramoyl-L-alanine + ADP + phosphate + H(+). The protein operates within cell wall biogenesis; peptidoglycan biosynthesis. Functionally, cell wall formation. This Paramagnetospirillum magneticum (strain ATCC 700264 / AMB-1) (Magnetospirillum magneticum) protein is UDP-N-acetylmuramate--L-alanine ligase.